A 123-amino-acid chain; its full sequence is D-ribose pyranase (123 aa).

H20 serves as the catalytic Proton donor. Substrate-binding positions include D28, H90, and 112-114; that span reads YAN.

It belongs to the RbsD / FucU family. RbsD subfamily. As to quaternary structure, homodecamer.

Its subcellular location is the cytoplasm. It catalyses the reaction beta-D-ribopyranose = beta-D-ribofuranose. It functions in the pathway carbohydrate metabolism; D-ribose degradation; D-ribose 5-phosphate from beta-D-ribopyranose: step 1/2. Its function is as follows. Catalyzes the interconversion of beta-pyran and beta-furan forms of D-ribose. The sequence is that of D-ribose pyranase from Corynebacterium glutamicum (strain ATCC 13032 / DSM 20300 / JCM 1318 / BCRC 11384 / CCUG 27702 / LMG 3730 / NBRC 12168 / NCIMB 10025 / NRRL B-2784 / 534).